The chain runs to 430 residues: Sulfide-quinone reductase (430 aa).

FAD contacts are provided by residues 9–13 (GGGVG), 34–36 (SDR), 42–43 (TP), and Thr105. Catalysis depends on Cys156, which acts as the Cysteine persulfide intermediate. Disulfide bonds link Cys280/Cys422 and Cys419/Cys430. Residues Val294 and Gly314 each contribute to the FAD site. Residue Ile346 coordinates a quinone. Cys347 functions as the Cysteine persulfide intermediate in the catalytic mechanism. Lys382 is an FAD binding site.

The protein belongs to the SQRD family. Homotrimer. FAD is required as a cofactor.

Its subcellular location is the membrane. It catalyses the reaction n a quinone + n hydrogen sulfide + n H(+) = polysulfur(n-2) + n a quinol. Catalyzes the oxidation of hydrogen sulfide, with the help of a quinone. Consecutive reaction cycles lead to the accumulation of a polysulfide product on the active site Cys residues; these products are released when they exceed a critical length, typically as cyclooctasulfur. In Aquifex aeolicus (strain VF5), this protein is Sulfide-quinone reductase.